The following is a 262-amino-acid chain: Hydroxyethylthiazole kinase (262 aa).

M50 is a binding site for substrate. ATP is bound by residues R125 and T171. G198 is a binding site for substrate.

This sequence belongs to the Thz kinase family. It depends on Mg(2+) as a cofactor.

It catalyses the reaction 5-(2-hydroxyethyl)-4-methylthiazole + ATP = 4-methyl-5-(2-phosphooxyethyl)-thiazole + ADP + H(+). It functions in the pathway cofactor biosynthesis; thiamine diphosphate biosynthesis; 4-methyl-5-(2-phosphoethyl)-thiazole from 5-(2-hydroxyethyl)-4-methylthiazole: step 1/1. Its function is as follows. Catalyzes the phosphorylation of the hydroxyl group of 4-methyl-5-beta-hydroxyethylthiazole (THZ). The polypeptide is Hydroxyethylthiazole kinase (Escherichia fergusonii (strain ATCC 35469 / DSM 13698 / CCUG 18766 / IAM 14443 / JCM 21226 / LMG 7866 / NBRC 102419 / NCTC 12128 / CDC 0568-73)).